The sequence spans 485 residues: UDP-N-acetylmuramate--L-alanine ligase (485 aa).

Residue 129–135 (GTHGKTT) participates in ATP binding.

It belongs to the MurCDEF family.

It is found in the cytoplasm. The catalysed reaction is UDP-N-acetyl-alpha-D-muramate + L-alanine + ATP = UDP-N-acetyl-alpha-D-muramoyl-L-alanine + ADP + phosphate + H(+). It functions in the pathway cell wall biogenesis; peptidoglycan biosynthesis. In terms of biological role, cell wall formation. This Vibrio campbellii (strain ATCC BAA-1116) protein is UDP-N-acetylmuramate--L-alanine ligase.